The chain runs to 1340 residues: DNA-directed RNA polymerase subunit beta (1340 aa).

Belongs to the RNA polymerase beta chain family. As to quaternary structure, the RNAP catalytic core consists of 2 alpha, 1 beta, 1 beta' and 1 omega subunit. When a sigma factor is associated with the core the holoenzyme is formed, which can initiate transcription.

It catalyses the reaction RNA(n) + a ribonucleoside 5'-triphosphate = RNA(n+1) + diphosphate. DNA-dependent RNA polymerase catalyzes the transcription of DNA into RNA using the four ribonucleoside triphosphates as substrates. This is DNA-directed RNA polymerase subunit beta from Baumannia cicadellinicola subsp. Homalodisca coagulata.